The sequence spans 339 residues: Photosystem II assembly lipoprotein Ycf48 (339 aa).

The signal sequence occupies residues 1–22 (MVIVKSWQKIFTLLVVLLLCIG). The N-palmitoyl cysteine moiety is linked to residue cysteine 23. The S-diacylglycerol cysteine moiety is linked to residue cysteine 23.

It belongs to the Ycf48 family. In terms of assembly, part of early PSII assembly complexes which includes D1 (psbA) and PsbI; not found in mature PSII. Binds to the lumenal side of PSII complexes. Interacts with YidC.

It localises to the cellular thylakoid membrane. In terms of biological role, a factor required for optimal assembly of photosystem II (PSII), acting in the early stages of PSII assembly. Also plays a role in replacement of photodamaged D1 (psbA). Assists YidC in synthesis of chlorophyll-binding proteins. This chain is Photosystem II assembly lipoprotein Ycf48, found in Nostoc sp. (strain PCC 7120 / SAG 25.82 / UTEX 2576).